Reading from the N-terminus, the 169-residue chain is Allophycocyanin subunit beta-18 (169 aa).

Asn-72 carries the post-translational modification N4-methylasparagine. Residue Cys-82 participates in (2R,3E)-phycocyanobilin binding.

This sequence belongs to the phycobiliprotein family. In terms of assembly, heterodimer of ApcE and this beta chain. In terms of processing, contains one covalently linked bilin chromophore. The chromophore is added by phycocyanobilin lyase CpcS 1.

It is found in the cellular thylakoid membrane. Its function is as follows. A variant beta-allophycocyanin (AP) which forms a complex with ApcE, a phycobilisome terminal emitter that influences energy transfer to photosystem II. The chain is Allophycocyanin subunit beta-18 (apcF) from Nostoc sp. (strain PCC 7120 / SAG 25.82 / UTEX 2576).